We begin with the raw amino-acid sequence, 379 residues long: Putative acetyl-CoA C-acetyltransferase VraB (379 aa).

Cys86 serves as the catalytic Acyl-thioester intermediate. The active-site Proton acceptor is His338.

This sequence belongs to the thiolase-like superfamily. Thiolase family.

The sequence is that of Putative acetyl-CoA C-acetyltransferase VraB (vraB) from Staphylococcus aureus (strain COL).